Consider the following 235-residue polypeptide: Large ribosomal subunit protein uL1 (235 aa).

It belongs to the universal ribosomal protein uL1 family. Part of the 50S ribosomal subunit.

Binds directly to 23S rRNA. The L1 stalk is quite mobile in the ribosome, and is involved in E site tRNA release. In terms of biological role, protein L1 is also a translational repressor protein, it controls the translation of the L11 operon by binding to its mRNA. The protein is Large ribosomal subunit protein uL1 of Parasynechococcus marenigrum (strain WH8102).